The chain runs to 653 residues: Epithelial sodium channel subunit gamma (653 aa).

Residues Met-1–Trp-54 are Cytoplasmic-facing. A helical membrane pass occupies residues Ile-55–Leu-75. The Extracellular portion of the chain corresponds to Met-76 to Cys-546. Disulfide bonds link Cys-100–Cys-290, Cys-214–Cys-221, Cys-267–Cys-274, Cys-379–Cys-464, Cys-401–Cys-460, Cys-405–Cys-456, Cys-414–Cys-441, and Cys-416–Cys-430. The chain crosses the membrane as a helical span at residues Ser-547–Ala-567. The Cytoplasmic segment spans residues Arg-568–Asn-653. The tract at residues Lys-582 to Asp-608 is disordered.

The protein belongs to the amiloride-sensitive sodium channel (TC 1.A.6) family. SCNN1G subfamily. Component of the heterotrimeric epithelial sodium channel (ENaC) composed of an alpha/SCNN1A, a beta/SCNN1B and a gamma/SCNN1G subunit. Strongly expressed in gill, liver, kidney and rectum and more weakly in heart, muscle and intestine.

The protein resides in the apical cell membrane. The enzyme catalyses Na(+)(in) = Na(+)(out). Its activity is regulated as follows. Originally identified and characterized by its inhibition by the diuretic drug amiloride. Its function is as follows. This is one of the three pore-forming subunits of the heterotrimeric epithelial sodium channel (ENaC), a critical regulator of sodium balance and fluid homeostasis. ENaC operates in epithelial tissues, where it mediates the electrodiffusion of sodium ions from extracellular fluid through the apical membrane of cells, with water following osmotically. This is Epithelial sodium channel subunit gamma from Neoceratodus forsteri (Australian lungfish).